We begin with the raw amino-acid sequence, 316 residues long: Arabinooligosaccharides transport system permease protein AraP (316 aa).

Transmembrane regions (helical) follow at residues 32–52 (VVPY…SFYP), 94–114 (TYMI…AVLL), 128–148 (ALFL…RLMF), 178–198 (MFLM…LYFL), 224–244 (FYVT…ISVI), 254–274 (FVFW…GYLY), and 283–303 (MGFG…ISIT). Positions 89–304 (LQNTTTYMIL…LIIFVISITQ (216 aa)) constitute an ABC transmembrane type-1 domain.

The protein belongs to the binding-protein-dependent transport system permease family. MalFG subfamily. The complex is composed of two ATP-binding proteins (MsmX), two transmembrane proteins (AraP and AraQ) and a solute-binding protein (AraN).

The protein localises to the cell membrane. Its function is as follows. Part of the ABC transporter complex AraNPQ involved in the uptake of arabinooligosaccharides. Responsible for the translocation of the substrate across the membrane. The protein is Arabinooligosaccharides transport system permease protein AraP (araP) of Halalkalibacterium halodurans (strain ATCC BAA-125 / DSM 18197 / FERM 7344 / JCM 9153 / C-125) (Bacillus halodurans).